Reading from the N-terminus, the 589-residue chain is uncharacterized protein (589 aa).

A run of 5 helical transmembrane segments spans residues 11-31 (LNWILTALFWVVLCFSVTMLA), 57-77 (LILMLLVLFIMILLEVRFSVL), 97-117 (FWFFAKLNALLVVAQVIHAIA), 190-210 (IEFTIILWSLSGVLTLFGFNI), and 213-233 (GVVFFIYAFIIFATLMSVWIG). Residues 57 to 357 (LILMLLVLFI…FRLFYEQFTL (301 aa)) enclose the ABC transmembrane type-1 domain. An ABC transporter domain is found at 390–587 (VALKNFGIKD…QLKLDVCLLC (198 aa)). ATP is bound at residue 423–430 (GASGTGKT).

It belongs to the ABC transporter superfamily.

It localises to the cell inner membrane. This is an uncharacterized protein from Haemophilus influenzae (strain ATCC 51907 / DSM 11121 / KW20 / Rd).